The primary structure comprises 239 residues: Leucyl/phenylalanyl-tRNA--protein transferase (239 aa).

This sequence belongs to the L/F-transferase family.

It localises to the cytoplasm. It catalyses the reaction N-terminal L-lysyl-[protein] + L-leucyl-tRNA(Leu) = N-terminal L-leucyl-L-lysyl-[protein] + tRNA(Leu) + H(+). It carries out the reaction N-terminal L-arginyl-[protein] + L-leucyl-tRNA(Leu) = N-terminal L-leucyl-L-arginyl-[protein] + tRNA(Leu) + H(+). The enzyme catalyses L-phenylalanyl-tRNA(Phe) + an N-terminal L-alpha-aminoacyl-[protein] = an N-terminal L-phenylalanyl-L-alpha-aminoacyl-[protein] + tRNA(Phe). Its function is as follows. Functions in the N-end rule pathway of protein degradation where it conjugates Leu, Phe and, less efficiently, Met from aminoacyl-tRNAs to the N-termini of proteins containing an N-terminal arginine or lysine. The chain is Leucyl/phenylalanyl-tRNA--protein transferase from Aliivibrio fischeri (strain ATCC 700601 / ES114) (Vibrio fischeri).